The primary structure comprises 232 residues: Orotate phosphoribosyltransferase (232 aa).

Residues Arg-107, Lys-108, Lys-111, His-113, and 133–141 contribute to the 5-phospho-alpha-D-ribose 1-diphosphate site; that span reads EDLTTAGGS. Orotate is bound at residue Thr-137.

Belongs to the purine/pyrimidine phosphoribosyltransferase family. PyrE subfamily. In terms of assembly, homodimer. Mg(2+) serves as cofactor.

The enzyme catalyses orotidine 5'-phosphate + diphosphate = orotate + 5-phospho-alpha-D-ribose 1-diphosphate. It participates in pyrimidine metabolism; UMP biosynthesis via de novo pathway; UMP from orotate: step 1/2. In terms of biological role, catalyzes the transfer of a ribosyl phosphate group from 5-phosphoribose 1-diphosphate to orotate, leading to the formation of orotidine monophosphate (OMP). The polypeptide is Orotate phosphoribosyltransferase (Rhizobium rhizogenes (strain K84 / ATCC BAA-868) (Agrobacterium radiobacter)).